The sequence spans 566 residues: Beta,beta-carotene 15,15'-dioxygenase (566 aa).

H172, H237, H308, and H514 together coordinate Fe cation. Residues 529 to 566 form a disordered region; that stretch reads TPAKTQEDENSDHPTGLTAPGLGHGENDFTAGHGGKSL.

The protein belongs to the carotenoid oxygenase family. Fe(2+) serves as cofactor.

The protein localises to the cytoplasm. It is found in the cytosol. The catalysed reaction is all-trans-beta-carotene + O2 = 2 all-trans-retinal. It participates in cofactor metabolism; retinol metabolism. Functionally, symmetrically cleaves beta-carotene into two molecules of retinal using a dioxygenase mechanism. The polypeptide is Beta,beta-carotene 15,15'-dioxygenase (Rattus norvegicus (Rat)).